The chain runs to 284 residues: Homeobox protein SIX1 (284 aa).

Positions 124-183 (GEETSYCFKEKSRGVLREWYAHNPYPSPREKRELAEATGLTTTQVSNWFKNRRQRDRAAE) form a DNA-binding region, homeobox. Residues 168–269 (VSNWFKNRRQ…LQTHQHQLQD (102 aa)) are disordered. A compositionally biased stretch (basic and acidic residues) spans 179–190 (DRAAEAKERENT). Positions 242–269 (RSSNYSLPGLTASQPSHGLQTHQHQLQD) are enriched in polar residues.

The protein belongs to the SIX/Sine oculis homeobox family. In terms of assembly, interacts with DACH1. Interacts with EYA1. Interacts with EYA2. Interacts with CDH1. Interacts with TBX18. Interacts with CEBPA. Interacts with CEBPB. Interacts with EBF2. Phosphorylated during interphase; becomes hyperphosphorylated during mitosis. Hyperphosphorylation impairs binding to promoter elements. In terms of processing, ubiquitinated by the anaphase promoting complex (APC), leading to its proteasomal degradation. Specifically expressed in skeletal muscle.

The protein resides in the nucleus. It localises to the cytoplasm. Its function is as follows. Transcription factor that is involved in the regulation of cell proliferation, apoptosis and embryonic development. Plays an important role in the development of several organs, including kidney, muscle and inner ear. Depending on context, functions as a transcriptional repressor or activator. Lacks an activation domain, and requires interaction with EYA family members for transcription activation. Mediates nuclear translocation of EYA1 and EYA2. Binds the 5'-TCA[AG][AG]TTNC-3' motif present in the MEF3 element in the MYOG promoter and CIDEA enhancer. Regulates the expression of numerous genes, including MYC, CCND1 and EZR. Acts as an activator of the IGFBP5 promoter, probably coactivated by EYA2. Repression of precursor cell proliferation in myoblasts is switched to activation through recruitment of EYA3 to the SIX1-DACH1 complex. During myogenesis, seems to act together with EYA2 and DACH2. Regulates the expression of CCNA1. Promotes brown adipocyte differentiation. This is Homeobox protein SIX1 (SIX1) from Homo sapiens (Human).